The primary structure comprises 364 residues: Chorismate synthase (364 aa).

Arg48 is a binding site for NADP(+). Residues Arg125–Ser127, Asn237–Ala238, Gly277, Lys292–Ser296, and Arg318 contribute to the FMN site.

The protein belongs to the chorismate synthase family. In terms of assembly, homotetramer. It depends on FMNH2 as a cofactor.

It catalyses the reaction 5-O-(1-carboxyvinyl)-3-phosphoshikimate = chorismate + phosphate. The protein operates within metabolic intermediate biosynthesis; chorismate biosynthesis; chorismate from D-erythrose 4-phosphate and phosphoenolpyruvate: step 7/7. Functionally, catalyzes the anti-1,4-elimination of the C-3 phosphate and the C-6 proR hydrogen from 5-enolpyruvylshikimate-3-phosphate (EPSP) to yield chorismate, which is the branch point compound that serves as the starting substrate for the three terminal pathways of aromatic amino acid biosynthesis. This reaction introduces a second double bond into the aromatic ring system. The protein is Chorismate synthase of Albidiferax ferrireducens (strain ATCC BAA-621 / DSM 15236 / T118) (Rhodoferax ferrireducens).